A 637-amino-acid chain; its full sequence is Chaperone protein HtpG (637 aa).

The tract at residues 1 to 345 is a; substrate-binding; that stretch reads MTAAQKETLG…SNDLPLNVSR (345 aa). The tract at residues 346–562 is b; that stretch reads EILQDNKVTQ…DNDMSSQMQK (217 aa). Residues 563-637 are c; sequence LMESVGQAAP…LNKLMLELSK (75 aa).

This sequence belongs to the heat shock protein 90 family. As to quaternary structure, homodimer.

The protein resides in the cytoplasm. Molecular chaperone. Has ATPase activity. The sequence is that of Chaperone protein HtpG from Pseudoalteromonas translucida (strain TAC 125).